A 62-amino-acid chain; its full sequence is Light-harvesting protein B-870 alpha chain (62 aa).

Met-1 carries the N-formylmethionine modification. The Cytoplasmic portion of the chain corresponds to 1 to 12; the sequence is MWRIWQLFDPRQ. A helical membrane pass occupies residues 13–33; that stretch reads ALVGLATFLFVLALLIHFILL. His-29 serves as a coordination point for a bacteriochlorophyll. Residues 34 to 52 are Periplasmic-facing; it reads STERFNWLEGASTKPVQTS. Positions 53-62 are excised as a propeptide; that stretch reads MVMPSSDLAV.

The protein belongs to the antenna complex alpha subunit family. The core complex is formed by different alpha and beta chains, binding bacteriochlorophyll molecules, and arranged most probably in tetrameric structures disposed around the reaction center. The non-pigmented gamma chains may constitute additional components.

It localises to the cell inner membrane. Its function is as follows. Antenna complexes are light-harvesting systems, which transfer the excitation energy to the reaction centers. The polypeptide is Light-harvesting protein B-870 alpha chain (Rhodospirillum rubrum).